A 78-amino-acid polypeptide reads, in one-letter code: MLKRSKFETTQSQIMHRAEELISAASNRYRITVQVANRAKRRRYEDFENNEDAMMKPVLRAIIEMSDELTQPEIIGEL.

This sequence belongs to the RNA polymerase subunit omega family. In cyanobacteria the RNAP catalytic core is composed of 2 alpha, 1 beta, 1 beta', 1 gamma and 1 omega subunit. When a sigma factor is associated with the core the holoenzyme is formed, which can initiate transcription.

The enzyme catalyses RNA(n) + a ribonucleoside 5'-triphosphate = RNA(n+1) + diphosphate. In terms of biological role, promotes RNA polymerase assembly. Latches the N- and C-terminal regions of the beta' subunit thereby facilitating its interaction with the beta and alpha subunits. The polypeptide is DNA-directed RNA polymerase subunit omega (Nostoc punctiforme (strain ATCC 29133 / PCC 73102)).